A 777-amino-acid chain; its full sequence is Dynamin-like protein ARC5 (777 aa).

In terms of domain architecture, Dynamin-type G spans 45-343 (PFEAPAVLVV…LWKRYKESVP (299 aa)). Residues 55–62 (GQQTDGKS) are G1 motif. 55 to 62 (GQQTDGKS) provides a ligand contact to GTP. Residues 81–83 (KTR) form a G2 motif region. The tract at residues 160–163 (DTPG) is G3 motif. GTP-binding positions include 160-164 (DTPGL) and 231-234 (TKLD). The segment at 231 to 234 (TKLD) is G4 motif. Residues 265–268 (SPFF) are G5 motif. Coiled coils occupy residues 300 to 320 (EDIA…EKSR) and 728 to 765 (NLRQ…NSHE).

Belongs to the TRAFAC class dynamin-like GTPase superfamily. Dynamin/Fzo/YdjA family. Forms a homodimer and heterodimers with DRP3A and DRP3B on peroxisomes. Also interacts with FIS1A (but not FIS1B) and PEX11 proteins (PEX11A, PEX11B, PEX11C, PEX11D and PEX11E) on peroxisomes. Interacts with PDV1 and PDV2. Stabilized at the plastid outer envelope membranes (OEMs) in the constriction site when in complex with GTP, but destabilized after conversion of GTP into GDP leading to turnover with a cytosolic pool.

It localises to the cytoplasm. It is found in the plastid. The protein localises to the chloroplast outer membrane. Its subcellular location is the peroxisome. The protein resides in the cytosol. The catalysed reaction is GTP + H2O = GDP + phosphate + H(+). GTPase activity is repressed by PDV2 thus increasing stability at the plastid outer envelope membranes (OEMs) periphery. Functionally, mechanochemical GTPase component of both plastid and peroxisome division machinery. Required for the last steps of plastid division specifically in mesophyll-cell, when the narrow isthmus breaks, facilitating the separation of the daughter plastids. Necessary for peroxisome activities. Seems to influence stromule (stroma-filled tubular extensions of the plastid envelope membrane) length and frequency. This chain is Dynamin-like protein ARC5, found in Arabidopsis thaliana (Mouse-ear cress).